Here is a 152-residue protein sequence, read N- to C-terminus: Endoribonuclease YbeY (152 aa).

Residues histidine 118, histidine 122, and histidine 128 each coordinate Zn(2+).

Belongs to the endoribonuclease YbeY family. It depends on Zn(2+) as a cofactor.

The protein localises to the cytoplasm. In terms of biological role, single strand-specific metallo-endoribonuclease involved in late-stage 70S ribosome quality control and in maturation of the 3' terminus of the 16S rRNA. The protein is Endoribonuclease YbeY of Lacticaseibacillus casei (strain BL23) (Lactobacillus casei).